Here is a 290-residue protein sequence, read N- to C-terminus: ATP synthase gamma chain (290 aa).

Belongs to the ATPase gamma chain family. In terms of assembly, F-type ATPases have 2 components, CF(1) - the catalytic core - and CF(0) - the membrane proton channel. CF(1) has five subunits: alpha(3), beta(3), gamma(1), delta(1), epsilon(1). CF(0) has three main subunits: a, b and c.

It is found in the cell inner membrane. In terms of biological role, produces ATP from ADP in the presence of a proton gradient across the membrane. The gamma chain is believed to be important in regulating ATPase activity and the flow of protons through the CF(0) complex. This chain is ATP synthase gamma chain, found in Delftia acidovorans (strain DSM 14801 / SPH-1).